The chain runs to 607 residues: Hemagglutinin glycoprotein (607 aa).

At 1 to 37 (MLSYQDKVGAFYKDNARANSSRLSLVTEDQGGRRPPY) the chain is on the intravirion side. Residues 38-58 (LLFVLLILLVGIMALLAITGV) form a helical membrane-spanning segment. At 59–607 (RFHQVSTSNM…IRFSCNRSKP (549 aa)) the chain is on the virion surface side. Residues asparagine 149, asparagine 309, asparagine 391, asparagine 422, asparagine 456, asparagine 587, and asparagine 603 are each glycosylated (N-linked (GlcNAc...) asparagine; by host).

This sequence belongs to the paramyxoviruses hemagglutinin-neuraminidase family. Non-sialidase subfamily. Binds canine SLAMF1 at the cell surface.

The protein resides in the virion membrane. Its subcellular location is the host cell membrane. In terms of biological role, attaches the virus to cell receptors and thereby initiating infection. Binding of H protein to the receptor induces a conformational change that allows the F protein to trigger virion/cell membranes fusion. The cellular receptor might be SLAM, and may explain the lymphotropism of the virus. The protein is Hemagglutinin glycoprotein (H) of Canine distemper virus (strain A92-27/4) (CDV).